Here is a 422-residue protein sequence, read N- to C-terminus: Tyrosine--tRNA ligase (422 aa).

Tyr37 is an L-tyrosine binding site. A 'HIGH' region motif is present at residues 42–51 (PTEESLHIGH). Residues Tyr175 and Gln179 each coordinate L-tyrosine. The 'KMSKS' region motif lies at 235–239 (KFGKT). Lys238 lines the ATP pocket. The region spanning 357-414 (KDLQEALVLTSLAQSRTQAKNMIISNSISINTEKIRKNHIFHEKDKLFGKFTLLSRGK) is the S4 RNA-binding domain.

This sequence belongs to the class-I aminoacyl-tRNA synthetase family. TyrS type 1 subfamily. In terms of assembly, homodimer.

The protein resides in the cytoplasm. It catalyses the reaction tRNA(Tyr) + L-tyrosine + ATP = L-tyrosyl-tRNA(Tyr) + AMP + diphosphate + H(+). In terms of biological role, catalyzes the attachment of tyrosine to tRNA(Tyr) in a two-step reaction: tyrosine is first activated by ATP to form Tyr-AMP and then transferred to the acceptor end of tRNA(Tyr). The sequence is that of Tyrosine--tRNA ligase from Buchnera aphidicola subsp. Acyrthosiphon pisum (strain APS) (Acyrthosiphon pisum symbiotic bacterium).